A 658-amino-acid chain; its full sequence is Translation factor GUF1, mitochondrial (658 aa).

Residues 1-40 constitute a mitochondrion transit peptide; that stretch reads MRGCLQTVRWLTSAWQRPPSYPPLSRAAPCRFFNVSIPRN. The 181-residue stretch at 60–240 folds into the tr-type G domain; it reads DRFRNFCIVA…TVVEQIPAPV (181 aa). Residues 69 to 76, 133 to 137, and 187 to 190 each bind GTP; these read AHVDHGKS, DTPGH, and NKVD.

The protein belongs to the TRAFAC class translation factor GTPase superfamily. Classic translation factor GTPase family. LepA subfamily.

The protein resides in the mitochondrion inner membrane. The enzyme catalyses GTP + H2O = GDP + phosphate + H(+). In terms of biological role, promotes mitochondrial protein synthesis. May act as a fidelity factor of the translation reaction, by catalyzing a one-codon backward translocation of tRNAs on improperly translocated ribosomes. Binds to mitochondrial ribosomes in a GTP-dependent manner. This Paracoccidioides brasiliensis (strain Pb03) protein is Translation factor GUF1, mitochondrial.